The following is a 391-amino-acid chain: ATP-sensitive inward rectifier potassium channel 1 (391 aa).

The Cytoplasmic segment spans residues 1–77 (MGASERSVFR…IWTTVLDLKW (77 aa)). Ser44 bears the Phosphoserine; by SGK1 mark. The chain crosses the membrane as a helical span at residues 78 to 102 (RYKMTVFITAFLGSWFLFGLLWYVV). Residues 103–127 (AYVHKDLPEFYPPDNRTPCVENING) are Extracellular-facing. Residue Asn117 is glycosylated (N-linked (GlcNAc...) asparagine). An intramembrane region (helical; Pore-forming) is located at residues 128-139 (MTSAFLFSLETQ). The pore-forming intramembrane region spans 140–146 (VTIGYGF). The short motif at 141–146 (TIGYGF) is the Selectivity filter element. The Extracellular segment spans residues 147–155 (RFVTEQCAT). A helical membrane pass occupies residues 156–177 (AIFLLIFQSILGVIINSFMCGA). Residues 178–391 (ILAKISRPKK…EVDETDDTQM (214 aa)) lie on the Cytoplasmic side of the membrane. Positions 180–207 (AKISRPKKRAKTITFSKNAVISKRGGKL) are polyphosphoinositide (PIP2)-binding. 223–230 (GSHIYGKL) lines the ATP pocket.

Belongs to the inward rectifier-type potassium channel (TC 1.A.2.1) family. KCNJ1 subfamily. In terms of assembly, interacts with SGK1 and SLC9A3R2/NHERF2. Post-translationally, phosphorylation at Ser-44 by SGK1 is necessary for its expression at the cell membrane. In terms of tissue distribution, mainly in kidney (renal cortex, medulla and papilla). Kidney.

The protein resides in the cell membrane. The catalysed reaction is K(+)(in) = K(+)(out). Inhibited by WNK3. Activated by phosphatidylinositol 4,5 biphosphate (PtdIns(4,5)P2). In terms of biological role, inward rectifier potassium channels are characterized by a greater tendency to allow potassium to flow into the cell rather than out of it. Their voltage dependence is regulated by the concentration of extracellular potassium; as external potassium is raised, the voltage range of the channel opening shifts to more positive voltages. The inward rectification is mainly due to the blockage of outward current by internal magnesium. This channel is activated by internal ATP and can be blocked by external barium. In the kidney, probably plays a major role in potassium homeostasis. Inward rectifier potassium channels are characterized by a greater tendency to allow potassium to flow into the cell rather than out of it. Their voltage dependence is regulated by the concentration of extracellular potassium; as external potassium is raised, the voltage range of the channel opening shifts to more positive voltages. This is ATP-sensitive inward rectifier potassium channel 1 (Kcnj1) from Rattus norvegicus (Rat).